We begin with the raw amino-acid sequence, 226 residues long: Ribonuclease 3 (226 aa).

The region spanning Ile6 to Asn128 is the RNase III domain. Position 41 (Glu41) interacts with Mg(2+). Asp45 is a catalytic residue. Mg(2+)-binding residues include Asp114 and Glu117. Glu117 is a catalytic residue. One can recognise a DRBM domain in the interval Asp155–Leu225.

This sequence belongs to the ribonuclease III family. Homodimer. The cofactor is Mg(2+).

It localises to the cytoplasm. The catalysed reaction is Endonucleolytic cleavage to 5'-phosphomonoester.. Functionally, digests double-stranded RNA. Involved in the processing of primary rRNA transcript to yield the immediate precursors to the large and small rRNAs (23S and 16S). Processes some mRNAs, and tRNAs when they are encoded in the rRNA operon. Processes pre-crRNA and tracrRNA of type II CRISPR loci if present in the organism. This Salmonella typhi protein is Ribonuclease 3.